Reading from the N-terminus, the 216-residue chain is MAGQGKPQIQFKLVLVGDGGTGKTTFMKRHLTGEFEKEYVATLGVEVHTLVFHTNRGPIKFNVWDTAGQEKFGGLRDGYYIQAQCAIIMFDVTSRVTYKNVPSWHKDLVRVCENIPIVLCGNKVDIKDMKVKAKPILFHRKKNLQYYDISAKSNYNFEKPFFWLARKLIGDPNLEFVAMPALAPPEVVMDPALAAQYEHDLEVAQTTALPDEEDDL.

At A2 the chain carries N-acetylalanine. Residues 7–171 (PQIQFKLVLV…FWLARKLIGD (165 aa)) enclose the Small GTPase Ran-type domain. 17–24 (GDGGTGKT) contacts GTP. Phosphothreonine is present on T24. The segment at 37 to 45 (KEYVATLGV) is switch-I. K60 bears the N6-acetyllysine mark. Position 65 to 69 (65 to 69 (DTAGQ)) interacts with GTP. Residues 68–84 (GQEKFGGLRDGYYIQAQ) form a switch-II region. Residue K71 is modified to N6-acetyllysine; alternate. K71 participates in a covalent cross-link: Glycyl lysine isopeptide (Lys-Gly) (interchain with G-Cter in SUMO2); alternate. K71 participates in a covalent cross-link: Glycyl lysine isopeptide (Lys-Gly) (interchain with G-Cter in ubiquitin); alternate. K99 carries the post-translational modification N6-acetyllysine. 122 to 125 (NKVD) is a GTP binding site. K134 is modified (N6-acetyllysine). K152 participates in a covalent cross-link: Glycyl lysine isopeptide (Lys-Gly) (interchain with G-Cter in SUMO2). An N6-acetyllysine; alternate modification is found at K159. K159 carries the post-translational modification N6-succinyllysine; alternate.

Belongs to the small GTPase superfamily. Ran family. In terms of tissue distribution, testis specific.

The protein resides in the nucleus. The enzyme catalyses GTP + H2O = GDP + phosphate + H(+). In terms of biological role, GTP-binding protein involved in nucleocytoplasmic transport. Required for the import of protein into the nucleus and also for RNA export. Involved in chromatin condensation and control of cell cycle. In Rattus norvegicus (Rat), this protein is GTP-binding nuclear protein Ran, testis-specific isoform (Rasl2-9).